Consider the following 312-residue polypeptide: Methionyl-tRNA formyltransferase (312 aa).

The interval 34–54 (PDAASGRRGKPQPSPVAREAA) is disordered. 110-113 (SLLP) is a binding site for (6S)-5,6,7,8-tetrahydrofolate.

This sequence belongs to the Fmt family.

It carries out the reaction L-methionyl-tRNA(fMet) + (6R)-10-formyltetrahydrofolate = N-formyl-L-methionyl-tRNA(fMet) + (6S)-5,6,7,8-tetrahydrofolate + H(+). Its function is as follows. Attaches a formyl group to the free amino group of methionyl-tRNA(fMet). The formyl group appears to play a dual role in the initiator identity of N-formylmethionyl-tRNA by promoting its recognition by IF2 and preventing the misappropriation of this tRNA by the elongation apparatus. The polypeptide is Methionyl-tRNA formyltransferase (Mycobacterium tuberculosis (strain ATCC 25177 / H37Ra)).